The primary structure comprises 120 residues: Lysozyme (120 aa).

One can recognise a C-type lysozyme domain in the interval 1–120; it reads KRFTRCGLVN…NHSNPDISSC (120 aa). 4 disulfide bridges follow: cysteine 6/cysteine 120, cysteine 27/cysteine 110, cysteine 62/cysteine 76, and cysteine 72/cysteine 90. Active-site residues include glutamate 32 and aspartate 50.

It belongs to the glycosyl hydrolase 22 family. Monomer.

It catalyses the reaction Hydrolysis of (1-&gt;4)-beta-linkages between N-acetylmuramic acid and N-acetyl-D-glucosamine residues in a peptidoglycan and between N-acetyl-D-glucosamine residues in chitodextrins.. Lysozymes have primarily a bacteriolytic function; those in tissues and body fluids are associated with the monocyte-macrophage system and enhance the activity of immunoagents. The protein is Lysozyme of Antheraea mylitta (Tasar silkworm).